We begin with the raw amino-acid sequence, 274 residues long: 2,3,4,5-tetrahydropyridine-2,6-dicarboxylate N-succinyltransferase (274 aa).

Residues R106 and D143 each contribute to the substrate site.

Belongs to the transferase hexapeptide repeat family. Homotrimer.

Its subcellular location is the cytoplasm. It carries out the reaction (S)-2,3,4,5-tetrahydrodipicolinate + succinyl-CoA + H2O = (S)-2-succinylamino-6-oxoheptanedioate + CoA. It participates in amino-acid biosynthesis; L-lysine biosynthesis via DAP pathway; LL-2,6-diaminopimelate from (S)-tetrahydrodipicolinate (succinylase route): step 1/3. The protein is 2,3,4,5-tetrahydropyridine-2,6-dicarboxylate N-succinyltransferase of Rickettsia prowazekii (strain Madrid E).